The chain runs to 269 residues: Hdr-like menaquinol oxidoreductase iron-sulfur subunit 1 (269 aa).

Residues 1-26 constitute a signal peptide (tat-type signal); it reads MMSRRKFLLLTGAAAAGAILTPQISA. Residues cysteine 52, cysteine 55, cysteine 72, cysteine 76, cysteine 118, cysteine 121, cysteine 126, cysteine 130, cysteine 150, cysteine 153, cysteine 156, cysteine 160, cysteine 194, cysteine 197, cysteine 215, and cysteine 219 each contribute to the [4Fe-4S] cluster site. One can recognise a 4Fe-4S ferredoxin-type domain in the interval 141 to 170; sequence GIVEIDMHRCIGCRYCMIACPYGARCFNFI.

In terms of assembly, consists of five subunits: an integral membrane subunit, a cytochrome b-like subunit, a cytochrome c subunit and two iron-sulfur subunits. [4Fe-4S] cluster is required as a cofactor. Predicted to be exported by the Tat system. The position of the signal peptide cleavage has been experimentally proven.

The protein resides in the cell membrane. Functionally, has menaquinol-oxidizing activity. HmeA, HmeB and HmeE subunits may together catalyze electron transfer from menaquinol to cytochrome c. In Archaeoglobus fulgidus (strain ATCC 49558 / DSM 4304 / JCM 9628 / NBRC 100126 / VC-16), this protein is Hdr-like menaquinol oxidoreductase iron-sulfur subunit 1 (hmeA).